A 249-amino-acid chain; its full sequence is Elongation factor Ts (249 aa).

Positions 82 to 85 are involved in Mg(2+) ion dislocation from EF-Tu; that stretch reads TDFV. Positions 215–249 are disordered; that stretch reads QAGQLAPEAESTTETADATSETTTEKSSAKKKKKK. Positions 222–236 are enriched in low complexity; the sequence is EAESTTETADATSET.

The protein belongs to the EF-Ts family.

Its subcellular location is the cytoplasm. Functionally, associates with the EF-Tu.GDP complex and induces the exchange of GDP to GTP. It remains bound to the aminoacyl-tRNA.EF-Tu.GTP complex up to the GTP hydrolysis stage on the ribosome. In Rippkaea orientalis (strain PCC 8801 / RF-1) (Cyanothece sp. (strain PCC 8801)), this protein is Elongation factor Ts.